Reading from the N-terminus, the 374-residue chain is Chaperone protein DnaJ (374 aa).

The J domain occupies D5–G70. Residues G132 to T210 form a CR-type zinc finger. Zn(2+) is bound by residues C145, C148, C162, C165, C184, C187, C198, and C201. CXXCXGXG motif repeat units follow at residues C145 to G152, C162 to G169, C184 to G191, and C198 to G205.

Belongs to the DnaJ family. As to quaternary structure, homodimer. The cofactor is Zn(2+).

It is found in the cytoplasm. Functionally, participates actively in the response to hyperosmotic and heat shock by preventing the aggregation of stress-denatured proteins and by disaggregating proteins, also in an autonomous, DnaK-independent fashion. Unfolded proteins bind initially to DnaJ; upon interaction with the DnaJ-bound protein, DnaK hydrolyzes its bound ATP, resulting in the formation of a stable complex. GrpE releases ADP from DnaK; ATP binding to DnaK triggers the release of the substrate protein, thus completing the reaction cycle. Several rounds of ATP-dependent interactions between DnaJ, DnaK and GrpE are required for fully efficient folding. Also involved, together with DnaK and GrpE, in the DNA replication of plasmids through activation of initiation proteins. The protein is Chaperone protein DnaJ of Saccharophagus degradans (strain 2-40 / ATCC 43961 / DSM 17024).